An 86-amino-acid polypeptide reads, in one-letter code: Small ribosomal subunit protein uS17 (86 aa).

It belongs to the universal ribosomal protein uS17 family. As to quaternary structure, part of the 30S ribosomal subunit.

Functionally, one of the primary rRNA binding proteins, it binds specifically to the 5'-end of 16S ribosomal RNA. The protein is Small ribosomal subunit protein uS17 of Bifidobacterium longum (strain DJO10A).